Reading from the N-terminus, the 375-residue chain is tRNA (guanine(26)-N(2))-dimethyltransferase (375 aa).

Residues 2 to 368 (KYITEGNTKL…AKLIDIVEFI (367 aa)) form the Trm1 methyltransferase domain. S-adenosyl-L-methionine contacts are provided by Arg-35, Arg-66, Asp-89, Asp-116, and Ala-117.

This sequence belongs to the class I-like SAM-binding methyltransferase superfamily. Trm1 family.

It carries out the reaction guanosine(26) in tRNA + 2 S-adenosyl-L-methionine = N(2)-dimethylguanosine(26) in tRNA + 2 S-adenosyl-L-homocysteine + 2 H(+). In terms of biological role, dimethylates a single guanine residue at position 26 of a number of tRNAs using S-adenosyl-L-methionine as donor of the methyl groups. In Methanococcus aeolicus (strain ATCC BAA-1280 / DSM 17508 / OCM 812 / Nankai-3), this protein is tRNA (guanine(26)-N(2))-dimethyltransferase.